Reading from the N-terminus, the 485-residue chain is Peptidyl-prolyl cis-trans isomerase-like 4 (485 aa).

Residues 1–172 enclose the PPIase cyclophilin-type domain; that stretch reads MSVLLETSAG…IDIRIKHTVI (172 aa). The region spanning 251-329 is the RRM domain; the sequence is NVLFVCKLNP…RRIHVDFSQS (79 aa). A disordered region spans residues 377–485; sequence NYRMVYGEEE…RDENDRRSRR (109 aa). A compositionally biased stretch (basic and acidic residues) spans 426-485; the sequence is RPRDRSRDRYHKPRDDRRGDRRDRDRRDQDRNRYRDRDHRDRGREKDRYGRDENDRRSRR.

This sequence belongs to the cyclophilin-type PPIase family. PPIL4 subfamily.

It is found in the nucleus. It carries out the reaction [protein]-peptidylproline (omega=180) = [protein]-peptidylproline (omega=0). PPIases accelerate the folding of proteins. It catalyzes the cis-trans isomerization of proline imidic peptide bonds in oligopeptides. This chain is Peptidyl-prolyl cis-trans isomerase-like 4 (CYP6), found in Gibberella zeae (strain ATCC MYA-4620 / CBS 123657 / FGSC 9075 / NRRL 31084 / PH-1) (Wheat head blight fungus).